We begin with the raw amino-acid sequence, 715 residues long: Polyribonucleotide nucleotidyltransferase (715 aa).

Positions 491 and 497 each coordinate Mg(2+). Positions 558 to 617 (PKIMTMTINPEKIRDVIGPQGRVINKIIEETGVKIDIEQDGRVFIASINHEANLRAKQII) constitute a KH domain. An S1 motif domain is found at 627–695 (GQVYLGTVKR…DQGRVNLSRK (69 aa)).

It belongs to the polyribonucleotide nucleotidyltransferase family. It depends on Mg(2+) as a cofactor.

The protein localises to the cytoplasm. The catalysed reaction is RNA(n+1) + phosphate = RNA(n) + a ribonucleoside 5'-diphosphate. Functionally, involved in mRNA degradation. Catalyzes the phosphorolysis of single-stranded polyribonucleotides processively in the 3'- to 5'-direction. The chain is Polyribonucleotide nucleotidyltransferase from Brevibacillus brevis (strain 47 / JCM 6285 / NBRC 100599).